Reading from the N-terminus, the 140-residue chain is Methylglyoxal synthase (140 aa).

The MGS-like domain maps to 1–140 (MKIALIAHDR…HEGDRRPLAF (140 aa)). Substrate-binding positions include His8, Lys12, 34 to 37 (TGTT), and 54 to 55 (SG). Asp60 acts as the Proton donor/acceptor in catalysis. A substrate-binding site is contributed by His87.

Belongs to the methylglyoxal synthase family.

The catalysed reaction is dihydroxyacetone phosphate = methylglyoxal + phosphate. Its function is as follows. Catalyzes the formation of methylglyoxal from dihydroxyacetone phosphate. The chain is Methylglyoxal synthase from Enterococcus faecalis (strain ATCC 700802 / V583).